Consider the following 370-residue polypeptide: 3-dehydroquinate synthase (370 aa).

NAD(+)-binding positions include Gly-107 to Asp-111, Thr-131 to Ser-132, Lys-144, and Lys-153. Zn(2+) contacts are provided by Glu-186, His-249, and His-267.

Belongs to the sugar phosphate cyclases superfamily. Dehydroquinate synthase family. It depends on Co(2+) as a cofactor. Zn(2+) is required as a cofactor. Requires NAD(+) as cofactor.

It is found in the cytoplasm. It carries out the reaction 7-phospho-2-dehydro-3-deoxy-D-arabino-heptonate = 3-dehydroquinate + phosphate. It functions in the pathway metabolic intermediate biosynthesis; chorismate biosynthesis; chorismate from D-erythrose 4-phosphate and phosphoenolpyruvate: step 2/7. Catalyzes the conversion of 3-deoxy-D-arabino-heptulosonate 7-phosphate (DAHP) to dehydroquinate (DHQ). The protein is 3-dehydroquinate synthase of Ruegeria pomeroyi (strain ATCC 700808 / DSM 15171 / DSS-3) (Silicibacter pomeroyi).